The following is a 595-amino-acid chain: Isoprene synthase, chloroplastic (595 aa).

The N-terminal 37 residues, 1-37 (MATELLCLHRPISLTHKLFRNPLPKVIQATPLTLKLR), are a transit peptide targeting the chloroplast. Asp-345 contributes to the dimethylallyl diphosphate binding site. Mg(2+)-binding residues include Asp-345 and Asp-349. The short motif at 345–349 (DDIYD) is the DDXXD motif element. Dimethylallyl diphosphate contacts are provided by Glu-423, Arg-486, and Asn-489. Mg(2+) contacts are provided by Asn-489, Ser-493, and Glu-497.

Belongs to the terpene synthase family. Tpsb subfamily. Mg(2+) is required as a cofactor. The cofactor is Mn(2+).

It is found in the plastid. The protein localises to the chloroplast. The enzyme catalyses dimethylallyl diphosphate = isoprene + diphosphate. Its function is as follows. Lyase that catalyzes the formation of isoprene from dimethylallyl diphosphate. In Populus tremuloides (Quaking aspen), this protein is Isoprene synthase, chloroplastic (ISPS).